Reading from the N-terminus, the 1486-residue chain is Helicase SWR1 (1486 aa).

2 disordered regions span residues 63-89 (DAGA…RGEE) and 113-219 (LDRP…LKRK). Residues 148-163 (VRKETNDEEHLKEEKS) show a composition bias toward basic and acidic residues. Over residues 164 to 173 (ASPTVWSPES) the composition is skewed to polar residues. The segment covering 174-190 (PQRDTYRTIHPSGDHEG) has biased composition (basic and acidic residues). The span at 193-204 (SSSSDSFYFTTS) shows a compositional bias: low complexity. The 73-residue stretch at 321–393 (ITTFYQEQEK…EEKRRRALAR (73 aa)) folds into the HSA domain. Disordered stretches follow at residues 446-492 (NQND…DSKL), 508-530 (TIDG…EDPQ), 548-590 (FETE…SSQT), and 606-628 (DDAH…EGVQ). The span at 467–487 (LGDEEMSSSSELDDSEVEAGE) shows a compositional bias: acidic residues. Over residues 511 to 523 (GRSQNSEVSSMTE) the composition is skewed to polar residues. The segment covering 562–588 (SSSSFSESEISQTSSSENESLINSNSS) has biased composition (low complexity). The region spanning 683–848 (ASLYNNNTNG…WSLLYFLMPQ (166 aa)) is the Helicase ATP-binding domain. 696–703 (DEMGLGKT) serves as a coordination point for ATP. A DEAH box motif is present at residues 799–802 (DEAH). The Helicase C-terminal domain occupies 1221–1371 (SLAVLLRRLK…NIVIQKGEFT (151 aa)). The tract at residues 1436-1468 (VDDRDFRESSTCANPSPDEDVDEEPVEDEYEGT) is disordered. The segment covering 1452-1465 (PDEDVDEEPVEDEY) has biased composition (acidic residues).

Belongs to the SNF2/RAD54 helicase family. SWR1 subfamily. Component of the SWR1 chromatin-remodeling complex.

The protein resides in the nucleus. It catalyses the reaction ATP + H2O = ADP + phosphate + H(+). In terms of biological role, catalytic component of the SWR1 complex which mediates the ATP-dependent exchange of histone H2A for the H2A variant HZT1 leading to transcriptional regulation of selected genes by chromatin remodeling. In Eremothecium gossypii (strain ATCC 10895 / CBS 109.51 / FGSC 9923 / NRRL Y-1056) (Yeast), this protein is Helicase SWR1 (SWR1).